The primary structure comprises 351 residues: Anthranilate phosphoribosyltransferase (351 aa).

5-phospho-alpha-D-ribose 1-diphosphate-binding positions include Gly-90, Gly-93 to Asp-94, Thr-98, Asn-100 to Thr-103, Lys-118 to Gly-126, and Ser-130. Gly-90 serves as a coordination point for anthranilate. Ser-102 lines the Mg(2+) pocket. Asn-121 contributes to the anthranilate binding site. Arg-176 is an anthranilate binding site. 2 residues coordinate Mg(2+): Asp-235 and Glu-236.

Belongs to the anthranilate phosphoribosyltransferase family. In terms of assembly, homodimer. Requires Mg(2+) as cofactor.

The enzyme catalyses N-(5-phospho-beta-D-ribosyl)anthranilate + diphosphate = 5-phospho-alpha-D-ribose 1-diphosphate + anthranilate. Its pathway is amino-acid biosynthesis; L-tryptophan biosynthesis; L-tryptophan from chorismate: step 2/5. In terms of biological role, catalyzes the transfer of the phosphoribosyl group of 5-phosphorylribose-1-pyrophosphate (PRPP) to anthranilate to yield N-(5'-phosphoribosyl)-anthranilate (PRA). The sequence is that of Anthranilate phosphoribosyltransferase from Prochlorococcus marinus (strain MIT 9313).